We begin with the raw amino-acid sequence, 673 residues long: Zinc finger protein 16 (673 aa).

Over residues 1-10 the composition is skewed to basic and acidic residues; that stretch reads MPSLRTRREE. The segment at 1–42 is disordered; sequence MPSLRTRREEAEMELSAPGPSPWTPAPQARVSDAPAVTHPGS. The necessary for transcription activation stretch occupies residues 62–210; sequence YQQPDCDTRT…GVPTAESPLI (149 aa). Residues 209–231 form a C2H2-type 1; degenerate zinc finger; the sequence is LICNECGKTFRGNPDLIQRQIVH. A C2H2-type 2; degenerate zinc finger spans residues 237-259; it reads FMCDDCGKTFSQNSVLKNRHXSH. Residue Lys253 forms a Glycyl lysine isopeptide (Lys-Gly) (interchain with G-Cter in SUMO2) linkage. 7 consecutive C2H2-type zinc fingers follow at residues 284 to 306, 312 to 334, 340 to 362, 368 to 390, 396 to 418, 424 to 446, and 452 to 474; these read YTCT…QKSH, YECN…QRIH, YVCS…HRTH, FECG…QRVH, YECN…HRVH, YKCS…RRIH, and HVCN…QIIH. The interval 332-364 is required for nuclear localization; sequence RIHSGEKPYVCSECGKAFRRSSNLIKHHRTHTG. Residues 464–494 form a required for nuclear localization region; sequence SSVLRKHQIIHTGEKPYRCSVCGKAFSHSSA. An N6-acetyllysine modification is found at Lys478. 7 C2H2-type zinc fingers span residues 480-502, 508-530, 536-558, 564-586, 592-614, 620-642, and 648-670; these read YRCS…QGVH, YACH…QRVH, YECT…QRIH, HECN…QKVH, YTCV…QIIH, YKCS…QRIH, and YDCA…QLIH.

This sequence belongs to the krueppel C2H2-type zinc-finger protein family. As to quaternary structure, interacts with INCA1; the interaction inhibits INCA1 activity and induces the cell cycle process.

The protein localises to the nucleus. Acts as a transcriptional activator. Promotes cell proliferation by facilitating the cell cycle phase transition from the S to G2/M phase. Involved in both the hemin- and phorbol myristate acetate (PMA)-induced erythroid and megakaryocytic differentiation, respectively. Also plays a role as an inhibitor of cell apoptosis. This chain is Zinc finger protein 16 (ZNF16), found in Pan paniscus (Pygmy chimpanzee).